Consider the following 490-residue polypeptide: Cell division cycle protein cdt2 (490 aa).

The tract at residues I18 to K40 is disordered. WD repeat units lie at residues A178–D208, Y226–D257, G285–D317, K339–S369, R387–V419, and G435–N464.

This sequence belongs to the WD repeat cdt2 family. As to quaternary structure, component of the DCX(DTL) E3 ubiquitin ligase complex, at least composed of cul4, ddb1, cdt2 and pip1.

The protein localises to the nucleus. The protein operates within protein modification; protein ubiquitination. Its function is as follows. Substrate-specific adapter of a DCX (DDB1-CUL4-X-box) E3 ubiquitin-protein ligase complex required for DNA replication during mitosis and meiosis. The DCX(DTL) complex, also named CRL4(CDT2) complex, mediates the polyubiquitination and subsequent degradation of cdt1 and spd1. Involved in the regulation of mitotic and pre-meiotic S-phase progression. The protein is Cell division cycle protein cdt2 (cdt2) of Schizosaccharomyces pombe (strain 972 / ATCC 24843) (Fission yeast).